The primary structure comprises 90 residues: Small ribosomal subunit protein bS16 (90 aa).

This sequence belongs to the bacterial ribosomal protein bS16 family.

The polypeptide is Small ribosomal subunit protein bS16 (Oceanobacillus iheyensis (strain DSM 14371 / CIP 107618 / JCM 11309 / KCTC 3954 / HTE831)).